The following is a 638-amino-acid chain: MSRTNMDTRHAHSALLAAPQSATANSRSSNSSSESSSNKNNINVGVGDDSGNVSAVSIDDGPHFRDIFHYGHEENYKLASSGITNLNSSSHAHQTLSPISISNASTPESFPEHPLGLERETEPALEAEMEAEELPPHQSKYLLSSIKATKRLKDARPFLKPVDPIALNIPHYFNYVQTPMDLSLIETKLQGNVYHSVEQVTSDFKTMVDNCLNFNGPESSISSMAKRIQKYFEKKLSAMPPRVLPASALKKTSRNRKKNEDMDSPLVIRRSVSTTNDNIGESGNREGVSGGRPKRTIHPPKSKDLFDIYENSKPKSKTLQKKFRTCLKILKVLMSKKNSDINFPFLQPVDPIALNLPNYFDVVKNPMDLGTISNNLMNWKYKTIDQFVDDLNLVFYNCFQFNPEGNEVHSMGKKLKELFNFHWLENQDILNEIETDSDLEEDNYSSSYSSDDEYDDEDINENDITNPAIQYLEQKLKKMEVELQQLKRQELSKLSKERKRKHLGKTLLRRKAMKHSVDDLKKSITDKINELSDLEMNGMIRIIKNSLPADEILTSNEDEIEIDLDILDEATIARIYERYFEKKNNNNSKRKLSGNYSTAPTNKKKKTLKFLEKDEIINNNNYSDSEEDSSDSSDSDSD.

Basic and acidic residues predominate over residues 1-10 (MSRTNMDTRH). The segment at 1-54 (MSRTNMDTRHAHSALLAAPQSATANSRSSNSSSESSSNKNNINVGVGDDSGNVS) is disordered. Positions 25–43 (NSRSSNSSSESSSNKNNIN) are enriched in low complexity. Positions 130–239 (EAEELPPHQS…KYFEKKLSAM (110 aa)) constitute a Bromo 1 domain. Residues 250–306 (KKTSRNRKKNEDMDSPLVIRRSVSTTNDNIGESGNREGVSGGRPKRTIHPPKSKDLF) form a disordered region. Serine 264 carries the post-translational modification Phosphoserine. A compositionally biased stretch (polar residues) spans 271 to 281 (SVSTTNDNIGE). One can recognise a Bromo 2 domain in the interval 317–426 (KTLQKKFRTC…ELFNFHWLEN (110 aa)). A disordered region spans residues 435-460 (TDSDLEEDNYSSSYSSDDEYDDEDIN). Positions 450 to 460 (SDDEYDDEDIN) are enriched in acidic residues. Positions 468-537 (AIQYLEQKLK…INELSDLEMN (70 aa)) form a coiled coil. In terms of domain architecture, NET spans 506-590 (TLLRRKAMKH…EKKNNNNSKR (85 aa)). Positions 586 to 638 (NNSKRKLSGNYSTAPTNKKKKTLKFLEKDEIINNNNYSDSEEDSSDSSDSDSD) are disordered. Positions 624 to 638 (DSEEDSSDSSDSDSD) are enriched in acidic residues.

This sequence belongs to the BET family. Interacts with the TFIID subunit TAF7 and with histone H4. Post-translationally, phosphorylated by the casein kinase CK2 complex.

The protein resides in the cytoplasm. It localises to the nucleus. Its function is as follows. Transcription factor involved in the expression of a broad class of genes including snRNAs. Required for sporulation and DNA-damage repair. Prevents the spreading of SIR silencing at telomeres and protects histone H4, but not H3, from deacetylation. The chain is Bromodomain-containing factor 2 (BDF2) from Saccharomyces cerevisiae (strain ATCC 204508 / S288c) (Baker's yeast).